Reading from the N-terminus, the 338-residue chain is 1-aminocyclopropane-1-carboxylate deaminase (338 aa).

The residue at position 51 (Lys51) is an N6-(pyridoxal phosphate)lysine. The active-site Nucleophile is Ser78.

It belongs to the ACC deaminase/D-cysteine desulfhydrase family. As to quaternary structure, homotrimer. Requires pyridoxal 5'-phosphate as cofactor.

The enzyme catalyses 1-aminocyclopropane-1-carboxylate + H2O = 2-oxobutanoate + NH4(+). Catalyzes a cyclopropane ring-opening reaction, the irreversible conversion of 1-aminocyclopropane-1-carboxylate (ACC) to ammonia and alpha-ketobutyrate. Allows growth on ACC as a nitrogen source. The polypeptide is 1-aminocyclopropane-1-carboxylate deaminase (Burkholderia orbicola (strain MC0-3)).